Consider the following 417-residue polypeptide: Serine hydroxymethyltransferase (417 aa).

Residues L121 and 125–127 (GHL) contribute to the (6S)-5,6,7,8-tetrahydrofolate site. K229 carries the N6-(pyridoxal phosphate)lysine modification. 355–357 (SPF) contributes to the (6S)-5,6,7,8-tetrahydrofolate binding site.

The protein belongs to the SHMT family. As to quaternary structure, homodimer. Pyridoxal 5'-phosphate serves as cofactor.

The protein resides in the cytoplasm. The catalysed reaction is (6R)-5,10-methylene-5,6,7,8-tetrahydrofolate + glycine + H2O = (6S)-5,6,7,8-tetrahydrofolate + L-serine. The protein operates within one-carbon metabolism; tetrahydrofolate interconversion. Its pathway is amino-acid biosynthesis; glycine biosynthesis; glycine from L-serine: step 1/1. Functionally, catalyzes the reversible interconversion of serine and glycine with tetrahydrofolate (THF) serving as the one-carbon carrier. This reaction serves as the major source of one-carbon groups required for the biosynthesis of purines, thymidylate, methionine, and other important biomolecules. Also exhibits THF-independent aldolase activity toward beta-hydroxyamino acids, producing glycine and aldehydes, via a retro-aldol mechanism. The polypeptide is Serine hydroxymethyltransferase (Proteus mirabilis (strain HI4320)).